Here is a 337-residue protein sequence, read N- to C-terminus: Zinc finger protein Gfi-1b (337 aa).

Residues M1–F20 are mediates repression of transcription. An SNAG domain region spans residues M1–F20. 6 consecutive C2H2-type zinc fingers follow at residues Y170–H193, F199–H221, F227–H249, Y255–H277, H283–H305, and F311–H334.

In terms of tissue distribution, expressed in erythroid cells of primitive and definitive lineage and bone marrow cells.

The protein resides in the nucleus. Its function is as follows. Essential transcriptional regulator necessary for development and differentiation of erythroid and megakaryocytic lineages. Alters histone methylation by recruiting histone methyltransferase to target genes promoters. Plays a role in heterochromatin formation. This is Zinc finger protein Gfi-1b (GFI1B) from Gallus gallus (Chicken).